The sequence spans 252 residues: Pantothenate synthetase (252 aa).

An ATP-binding site is contributed by 29–36 (MGNLHAGH). The Proton donor role is filled by histidine 36. Glutamine 60 is a (R)-pantoate binding site. Glutamine 60 provides a ligand contact to beta-alanine. 146–149 (GEKD) lines the ATP pocket. Residue glutamine 152 participates in (R)-pantoate binding. Residues valine 175 and 183–186 (CSSR) contribute to the ATP site.

Belongs to the pantothenate synthetase family. Homodimer.

The protein resides in the cytoplasm. It catalyses the reaction (R)-pantoate + beta-alanine + ATP = (R)-pantothenate + AMP + diphosphate + H(+). Its pathway is cofactor biosynthesis; (R)-pantothenate biosynthesis; (R)-pantothenate from (R)-pantoate and beta-alanine: step 1/1. In terms of biological role, catalyzes the condensation of pantoate with beta-alanine in an ATP-dependent reaction via a pantoyl-adenylate intermediate. This chain is Pantothenate synthetase, found in Legionella pneumophila (strain Corby).